The following is a 513-amino-acid chain: Histidine ammonia-lyase (513 aa).

A cross-link (5-imidazolinone (Ala-Gly)) is located at residues 142–144; sequence ASG. The residue at position 143 (Ser143) is a 2,3-didehydroalanine (Ser).

The protein belongs to the PAL/histidase family. Post-translationally, contains an active site 4-methylidene-imidazol-5-one (MIO), which is formed autocatalytically by cyclization and dehydration of residues Ala-Ser-Gly.

The protein resides in the cytoplasm. The catalysed reaction is L-histidine = trans-urocanate + NH4(+). The protein operates within amino-acid degradation; L-histidine degradation into L-glutamate; N-formimidoyl-L-glutamate from L-histidine: step 1/3. This Hyphomonas neptunium (strain ATCC 15444) protein is Histidine ammonia-lyase.